The sequence spans 108 residues: Class I hydrophobin hgfII (108 aa).

The signal sequence occupies residues 1-19; the sequence is MFSRIAAVSFLALPLLAAA. 4 disulfide bridges follow: cysteine 28-cysteine 89, cysteine 35-cysteine 83, cysteine 36-cysteine 69, and cysteine 90-cysteine 103. A glycan (N-linked (GlcNAc...) asparagine) is linked at asparagine 92.

The protein belongs to the fungal hydrophobin family. As to quaternary structure, self-assembles to form functional amyloid fibrils called rodlets with a diameter of 15-30 nm. Self-assembly into fibrillar rodlets occurs spontaneously at hydrophobic:hydrophilic interfaces and the rodlets further associate laterally to form amphipathic monolayers. As to expression, highky expressed in hyphae cultured in liquid medium.

It is found in the secreted. It localises to the cell wall. In terms of biological role, aerial growth, conidiation, and dispersal of filamentous fungi in the environment rely upon a capability of their secreting small amphipathic proteins called hydrophobins (HPBs) with low sequence identity. Class I can self-assemble into an outermost layer of rodlet bundles on aerial cell surfaces, conferring cellular hydrophobicity that supports fungal growth, development and dispersal; whereas Class II form highly ordered films at water-air interfaces through intermolecular interactions but contribute nothing to the rodlet structure. HgfII is a class I hydrophobin that is involved in cell surface hydrophobicity and might play a key role during the growth and development of hyphae cultured in liquid medium. The polypeptide is Class I hydrophobin hgfII (Grifola frondosa (Maitake)).